The following is a 190-amino-acid chain: Protein PLANT CADMIUM RESISTANCE 10 (190 aa).

A run of 2 helical transmembrane segments spans residues 78 to 98 (LLGS…WALV) and 108 to 125 (GALL…ACGY).

Belongs to the cornifelin family.

The protein resides in the membrane. In terms of biological role, may be involved in cadmium resistance. The chain is Protein PLANT CADMIUM RESISTANCE 10 (PCR10) from Arabidopsis thaliana (Mouse-ear cress).